Here is a 625-residue protein sequence, read N- to C-terminus: 1,4-alpha-glucan branching enzyme GlgB (625 aa).

Asp-302 serves as the catalytic Nucleophile. Glu-355 functions as the Proton donor in the catalytic mechanism.

It belongs to the glycosyl hydrolase 13 family. GlgB subfamily. Monomer.

It carries out the reaction Transfers a segment of a (1-&gt;4)-alpha-D-glucan chain to a primary hydroxy group in a similar glucan chain.. The protein operates within glycan biosynthesis; glycogen biosynthesis. Functionally, catalyzes the formation of the alpha-1,6-glucosidic linkages in glycogen by scission of a 1,4-alpha-linked oligosaccharide from growing alpha-1,4-glucan chains and the subsequent attachment of the oligosaccharide to the alpha-1,6 position. The polypeptide is 1,4-alpha-glucan branching enzyme GlgB (Albidiferax ferrireducens (strain ATCC BAA-621 / DSM 15236 / T118) (Rhodoferax ferrireducens)).